Reading from the N-terminus, the 503-residue chain is Cytochrome P450 3A15 (503 aa).

Cys-442 is a binding site for heme.

Belongs to the cytochrome P450 family. It depends on heme as a cofactor.

It localises to the endoplasmic reticulum membrane. It is found in the microsome membrane. It carries out the reaction an organic molecule + reduced [NADPH--hemoprotein reductase] + O2 = an alcohol + oxidized [NADPH--hemoprotein reductase] + H2O + H(+). Its function is as follows. Cytochromes P450 are a group of heme-thiolate monooxygenases. In liver microsomes, this enzyme is involved in an NADPH-dependent electron transport pathway. It oxidizes a variety of structurally unrelated compounds, including steroids, fatty acids, and xenobiotics. The polypeptide is Cytochrome P450 3A15 (CYP3A15) (Cavia porcellus (Guinea pig)).